The sequence spans 623 residues: Glutamine--fructose-6-phosphate aminotransferase [isomerizing] (623 aa).

C2 functions as the Nucleophile; for GATase activity in the catalytic mechanism. One can recognise a Glutamine amidotransferase type-2 domain in the interval 2 to 228; the sequence is CGIVGYIGQA…NDQVVTITAD (227 aa). 2 consecutive SIS domains span residues 295-435 and 468-613; these read IDEA…LRGN and LGQD…VDQP. Residue K618 is the For Fru-6P isomerization activity of the active site.

In terms of assembly, homodimer.

It is found in the cytoplasm. It catalyses the reaction D-fructose 6-phosphate + L-glutamine = D-glucosamine 6-phosphate + L-glutamate. Its function is as follows. Catalyzes the first step in hexosamine metabolism, converting fructose-6P into glucosamine-6P using glutamine as a nitrogen source. The sequence is that of Glutamine--fructose-6-phosphate aminotransferase [isomerizing] from Corynebacterium glutamicum (strain ATCC 13032 / DSM 20300 / JCM 1318 / BCRC 11384 / CCUG 27702 / LMG 3730 / NBRC 12168 / NCIMB 10025 / NRRL B-2784 / 534).